Here is a 109-residue protein sequence, read N- to C-terminus: Phosphoribosyl-AMP cyclohydrolase (109 aa).

Aspartate 76 serves as a coordination point for Mg(2+). Cysteine 77 lines the Zn(2+) pocket. Aspartate 78 and aspartate 80 together coordinate Mg(2+). Zn(2+) contacts are provided by cysteine 93 and cysteine 100.

This sequence belongs to the PRA-CH family. As to quaternary structure, homodimer. Mg(2+) is required as a cofactor. Zn(2+) serves as cofactor.

It localises to the cytoplasm. The catalysed reaction is 1-(5-phospho-beta-D-ribosyl)-5'-AMP + H2O = 1-(5-phospho-beta-D-ribosyl)-5-[(5-phospho-beta-D-ribosylamino)methylideneamino]imidazole-4-carboxamide. Its pathway is amino-acid biosynthesis; L-histidine biosynthesis; L-histidine from 5-phospho-alpha-D-ribose 1-diphosphate: step 3/9. Its function is as follows. Catalyzes the hydrolysis of the adenine ring of phosphoribosyl-AMP. This is Phosphoribosyl-AMP cyclohydrolase from Streptococcus mutans serotype c (strain ATCC 700610 / UA159).